A 295-amino-acid chain; its full sequence is Pyridoxal 5'-phosphate synthase subunit PdxS (295 aa).

Asp-25 contacts D-ribose 5-phosphate. Lys-82 acts as the Schiff-base intermediate with D-ribose 5-phosphate in catalysis. A D-ribose 5-phosphate-binding site is contributed by Gly-154. D-glyceraldehyde 3-phosphate is bound at residue Arg-166. D-ribose 5-phosphate is bound by residues Gly-215 and 236–237; that span reads GS.

This sequence belongs to the PdxS/SNZ family. In the presence of PdxT, forms a dodecamer of heterodimers.

The catalysed reaction is aldehydo-D-ribose 5-phosphate + D-glyceraldehyde 3-phosphate + L-glutamine = pyridoxal 5'-phosphate + L-glutamate + phosphate + 3 H2O + H(+). Its pathway is cofactor biosynthesis; pyridoxal 5'-phosphate biosynthesis. Catalyzes the formation of pyridoxal 5'-phosphate from ribose 5-phosphate (RBP), glyceraldehyde 3-phosphate (G3P) and ammonia. The ammonia is provided by the PdxT subunit. Can also use ribulose 5-phosphate and dihydroxyacetone phosphate as substrates, resulting from enzyme-catalyzed isomerization of RBP and G3P, respectively. The protein is Pyridoxal 5'-phosphate synthase subunit PdxS of Haemophilus ducreyi (strain 35000HP / ATCC 700724).